The chain runs to 960 residues: Anoctamin-1 (960 aa).

Residues 1–333 are Cytoplasmic-facing; that stretch reads MRVPEKYSTL…FGEKVGLYFA (333 aa). The interval 92–115 is disordered; sequence TRSVRQDQPLPGKGSPVDAGSPEV. S196 carries the post-translational modification Phosphoserine. The helical transmembrane segment at 334 to 354 threads the bilayer; it reads WLGAYTQMLIPASIVGVIVFL. Residues 355 to 406 are Extracellular-facing; that stretch reads YGCATVDENIPSMEMCDQRYNITMCPLCDKTCSYWKMSSACATARASHLFDN. 4 disulfides stabilise this stretch: C370/C395, C379/C836, C382/C386, and C625/C630. Residues 407–427 form a helical membrane-spanning segment; sequence PATVFFSVFMALWAATFMEHW. A Ca(2+)-binding site is contributed by E425. The Cytoplasmic portion of the chain corresponds to 428–493; that stretch reads KRKQMRLNYR…RDRFPAYFTN (66 aa). A helical membrane pass occupies residues 494 to 514; that stretch reads LVSIIFMIAVTFAIVLGVIIY. Topologically, residues 515–542 are extracellular; the sequence is RISTAAALAMNSSPSVRSNIRVTVTATA. A helical membrane pass occupies residues 543-563; sequence VIINLVVIILLDEVYGCIARW. At 564 to 581 the chain is on the cytoplasmic side; sequence LTKIEVPKTEKSFEERLT. A helical membrane pass occupies residues 582–602; it reads FKAFLLKFVNSYTPIFYVAFF. Over 603-631 the chain is Extracellular; the sequence is KGRFVGRPGDYVYIFRSFRMEECAPGGCL. Residues 632 to 652 traverse the membrane as a helical segment; sequence MELCIQLSIIMLGKQLIQNNL. Ca(2+) contacts are provided by N651, E654, E702, E705, E734, and D738. Over 653–699 the chain is Cytoplasmic; sequence FEIGIPKMKKFIRYLKLRRQSPSDREEYVKRKQRYEVDFNLEPFAGL. 2 helical membrane-spanning segments follow: residues 700 to 720 and 721 to 741; these read TPEYMEMIIQFGFVTLFVASF and PLAPLFALLNNIIEIRLDAKK. The Cytoplasmic portion of the chain corresponds to 742–758; the sequence is FVTELRRPVAIRAKDIG. The chain crosses the membrane as a helical span at residues 759-779; sequence IWYNILRGVGKLAVIINAFVI. At 780 to 866 the chain is on the extracellular side; it reads SFTSDFIPRL…FWAVLAARLA (87 aa). N806 carries an N-linked (GlcNAc...) asparagine glycan. The chain crosses the membrane as a helical span at residues 867 to 887; that stretch reads FVIVFQNLVMFMSDFVDWVIP. Ca(2+) is bound by residues D883 and D888. Topologically, residues 888 to 960 are cytoplasmic; it reads DIPKDISQQI…PSYEYHGDAL (73 aa). The interval 928 to 960 is disordered; it reads PRDVPCNNHSPTTHPEAGDGSPVPSYEYHGDAL.

The protein belongs to the anoctamin family. In terms of assembly, homodimer. Interacts with CFTR. Interacts with TRPV4. Expressed at the apical surface of the vomeronasal epithelium (at protein level). Expressed in the lateral and septal nasal glands (at protein level). Highly expressed in pulmonary bronchiole epithelial cells, pancreatic and submandibular gland acinar cells, kidney proximal tubule, all retinal cell layers, most sensory cells of dorsal root ganglia, Leydig cells and spermatocytes (at protein level). In the dorsal root ganglia, detected in small-diameter nociceptive neurons and in larger myelinated neurons (at protein level). In the dorsal root ganglia, expressed in MrgprA3-positive neurons (at protein level). In the developing brain, highly expressed in the ventricular zone and subventricular zone at 12.5 dpc and 14.5 dpc where it is detected in radial glial cells but not in neurons with expression dramatically decreased at P1 (at protein level). Highly expressed in the endometrial stroma (at protein level). In taste buds of the vallate papillae, expressed in the apical region of type I taste cells (at protein level). In the kidney, expressed in the collecting duct (at protein level). In the retina, strongly expressed in the outer and inner plexiform layers, weakly expressed in some somata in the inner nuclear layer and ganglion cell layer and not expressed in the outer nuclear layer (at protein level). Expressed in various retinal neurons including rod bipolar cells (at protein level). Expressed in eye, brain, myometrium and endometrium with higher levels in endometrium than myometrium in estrus and day 18 pregnant mice. Not detected in uterine smooth muscle cells. Expressed at high levels in the thyroid gland and gastrointestinal muscles.

The protein resides in the apical cell membrane. The protein localises to the presynapse. It catalyses the reaction chloride(in) = chloride(out). ATP and calmodulin are essential for its activation. Channel activity is inhibited by CFTR protein and by chloride inhibitors such as niflumic acid (NFA) and 4,4'-diisothiocyanatostilbene-2,2'-disulfonic acid (DIDS). Activated by heat with activation seen at temperatures above 44 degrees Celsius. Activated by BDNF in radial glial cells. Functionally, calcium-activated chloride channel (CaCC). Plays a role in transepithelial anion transport and smooth muscle contraction. Required for the normal functioning of the interstitial cells of Cajal (ICCs) which generate electrical pacemaker activity in gastrointestinal smooth muscles. Acts as a major contributor to basal and stimulated chloride conductance in airway epithelial cells and plays an important role in tracheal cartilage development. Required for CFTR activation by enhancing endoplasmic reticulum Ca(2+) store release and is also required for CFTR membrane expression. Required for basal and ATP-dependent mucus secretion in airways and intestine, probably by controlling exocytosis of mucus-filled granules by providing Ca(2+) to an apical signaling compartment. Contributes to airway mucus expression induced by interleukins IL3 and IL8 and by the asthma-associated protein CLCA1 and is required for expression of mucin MUC5AC. However, was shown in another study not to be required for MUC5AC expression. Plays a role in the propagation of Ca(2+) waves in Kolliker's organ in the cochlea and contributes to the refinement of auditory brainstem circuitries prior to hearing onset. In vomeronasal sensory neurons, modulates spontaneous firing patterns in the absence of stimuli as well as the firing pattern of pheromone-evoked activity. Responsible for calcium-activated chloride channel activity in type I taste cells of the vallate papillae. Acts as a heat sensor in nociceptive neurons. In dorsal root ganglion neurons, plays a role in mediating non-histaminergic Mas-related G-protein coupled receptor (MRGPR)-dependent itching, acting as a downstream effector of MRGPRs. In the developing brain, required for the Ca(2+)-dependent process extension of radial glial cells. This chain is Anoctamin-1 (Ano1), found in Mus musculus (Mouse).